Here is a 533-residue protein sequence, read N- to C-terminus: Flavin-containing monooxygenase 5 (533 aa).

Arg-5 bears the Dimethylated arginine mark. Residues 10-14, Glu-33, and 41-42 each bind FAD; these read GGGVS and LW. The residue at position 54 (Ser-54) is a Phosphoserine. The residue at position 56 (Tyr-56) is a Phosphotyrosine. Phosphoserine is present on Ser-58. An FAD-binding site is contributed by 62 to 63; that stretch reads NT. 196-199 is an NADP(+) binding site; sequence SGGD. At Ser-280 the chain carries Phosphoserine. Phosphothreonine is present on Thr-284. Residue Ser-401 is modified to Phosphoserine. A helical transmembrane segment spans residues 513-533; it reads TMTIGKFMLALAFFAIIIAYF.

It belongs to the FMO family. FAD serves as cofactor. In terms of tissue distribution, expressed in fetal and adult liver.

It localises to the microsome membrane. It is found in the endoplasmic reticulum membrane. The enzyme catalyses N,N-dimethylaniline + NADPH + O2 + H(+) = N,N-dimethylaniline N-oxide + NADP(+) + H2O. It carries out the reaction NADPH + O2 + H(+) = H2O2 + NADP(+). It catalyses the reaction heptan-2-one + NADPH + O2 + H(+) = pentyl acetate + NADP(+) + H2O. The catalysed reaction is octan-3-one + NADPH + O2 + H(+) = pentyl propanoate + NADP(+) + H2O. The enzyme catalyses octan-3-one + NADPH + O2 + H(+) = ethyl hexanoate + NADP(+) + H2O. It carries out the reaction hexan-3-one + NADPH + O2 + H(+) = ethyl butanoate + NADP(+) + H2O. It catalyses the reaction hexan-3-one + NADPH + O2 + H(+) = propyl propanoate + NADP(+) + H2O. The catalysed reaction is heptan-4-one + NADPH + O2 + H(+) = propyl butanoate + NADP(+) + H2O. The enzyme catalyses (2E)-geranial + NADPH + O2 + H(+) = (1E)-2,6-dimethylhepta-1,5-dien-1-yl formate + NADP(+) + H2O. It carries out the reaction sulcatone + NADPH + O2 + H(+) = 4-methylpent-3-en-1-yl acetate + NADP(+) + H2O. Functionally, acts as a Baeyer-Villiger monooxygenase on a broad range of substrates. Catalyzes the insertion of an oxygen atom into a carbon-carbon bond adjacent to a carbonyl, which converts ketones to esters. Active on diverse carbonyl compounds, whereas soft nucleophiles are mostly non- or poorly reactive. In contrast with other forms of FMO it is non- or poorly active on 'classical' substrates such as drugs, pesticides, and dietary components containing soft nucleophilic heteroatoms. Able to oxidize drug molecules bearing a carbonyl group on an aliphatic chain, such as nabumetone and pentoxifylline. Also, in the absence of substrates, shows slow but yet significant NADPH oxidase activity. Acts as a positive modulator of cholesterol biosynthesis as well as glucose homeostasis, promoting metabolic aging via pleiotropic effects. This chain is Flavin-containing monooxygenase 5, found in Homo sapiens (Human).